The chain runs to 666 residues: Fructose-1,6-bisphosphatase class 3 (666 aa).

Belongs to the FBPase class 3 family. The cofactor is Mn(2+).

The enzyme catalyses beta-D-fructose 1,6-bisphosphate + H2O = beta-D-fructose 6-phosphate + phosphate. The protein operates within carbohydrate biosynthesis; gluconeogenesis. The polypeptide is Fructose-1,6-bisphosphatase class 3 (Parabacteroides distasonis (strain ATCC 8503 / DSM 20701 / CIP 104284 / JCM 5825 / NCTC 11152)).